The sequence spans 107 residues: U1-lycotoxin-Ls1o (107 aa).

Residues 1 to 20 (MMKVLVVVALLVTLISYSSS) form the signal peptide. The propeptide occupies 21 to 41 (EGIDDLEADELLSLMANEQTR). 4 disulfide bridges follow: Cys44–Cys59, Cys51–Cys68, Cys58–Cys86, and Cys70–Cys84.

This sequence belongs to the neurotoxin 19 (CSTX) family. 04 (U1-Lctx) subfamily. Expressed by the venom gland.

Its subcellular location is the secreted. This chain is U1-lycotoxin-Ls1o, found in Lycosa singoriensis (Wolf spider).